The primary structure comprises 88 residues: Small ribosomal subunit protein bS16c (88 aa).

Belongs to the bacterial ribosomal protein bS16 family.

The protein resides in the plastid. It localises to the chloroplast. In Jasminum nudiflorum (Winter jasmine), this protein is Small ribosomal subunit protein bS16c.